A 393-amino-acid polypeptide reads, in one-letter code: MKLSQVSALAACVPAATARFVELMEADHVVLRPDEPTFLIETAPGKTQWVTEEQKWELRRDGQRFMDITATKDLGSQGLRIKESVEFPKKCVNQDEVKSLAKNLDTAPMKANLEKLSSFHTRYYNSEWGLKSSDWVLEKVNEMIKEAGADKTVTAQSFPHTWKQHSVIATIPGQTNSTIVIGAHQDSINLWLPILAAPGADDDGSGTVTIMEVFRALLKSKDVVQGKAINTIEFHWYSAEEGGLLGSQAIFQQYEKQQRDVKAMLQQDMTGYVKGTLDAGLPESVGVIVDFVHAGLTKFIKTVIEQYCAIPWVETKCGYACSDHASASKAGYPSAFVIESSFDKSDPNIHTTSDLIEHLSFDHMLQHAHMTLGFVYELGFHNFAKAVEGDGEL.

Residues 1–18 (MKLSQVSALAACVPAATA) form the signal peptide. Positions 19-84 (RFVELMEADH…GSQGLRIKES (66 aa)) are excised as a propeptide. Residue asparagine 176 is glycosylated (N-linked (GlcNAc...) asparagine). Zn(2+) contacts are provided by histidine 184, aspartate 202, glutamate 241, and aspartate 268. Cysteine 317 and cysteine 321 are oxidised to a cystine. Histidine 350 contacts Zn(2+).

Belongs to the peptidase M28 family. M28E subfamily. As to quaternary structure, monomer. The cofactor is Zn(2+).

The protein resides in the secreted. Its function is as follows. Extracellular aminopeptidase that allows assimilation of proteinaceous substrates. The protein is Leucine aminopeptidase 1 (LAP1) of Metarhizium robertsii (strain ARSEF 23 / ATCC MYA-3075) (Metarhizium anisopliae (strain ARSEF 23)).